A 397-amino-acid chain; its full sequence is Arginine biosynthesis bifunctional protein ArgJ (397 aa).

6 residues coordinate substrate: T143, K169, T180, E266, N392, and T397. The active-site Nucleophile is T180.

It belongs to the ArgJ family. In terms of assembly, heterotetramer of two alpha and two beta chains.

It is found in the cytoplasm. The catalysed reaction is N(2)-acetyl-L-ornithine + L-glutamate = N-acetyl-L-glutamate + L-ornithine. It carries out the reaction L-glutamate + acetyl-CoA = N-acetyl-L-glutamate + CoA + H(+). It participates in amino-acid biosynthesis; L-arginine biosynthesis; L-ornithine and N-acetyl-L-glutamate from L-glutamate and N(2)-acetyl-L-ornithine (cyclic): step 1/1. It functions in the pathway amino-acid biosynthesis; L-arginine biosynthesis; N(2)-acetyl-L-ornithine from L-glutamate: step 1/4. Its activity is regulated as follows. Competitively inhibited by L-ornithine. In terms of biological role, catalyzes two activities which are involved in the cyclic version of arginine biosynthesis: the synthesis of N-acetylglutamate from glutamate and acetyl-CoA as the acetyl donor, and of ornithine by transacetylation between N(2)-acetylornithine and glutamate. This chain is Arginine biosynthesis bifunctional protein ArgJ, found in Thermotoga neapolitana (strain ATCC 49049 / DSM 4359 / NBRC 107923 / NS-E).